Reading from the N-terminus, the 234-residue chain is MKVIPAIDLMDGQVVRLRRGKAKDKTVYSDDPVKVALTWEKDGADMLHIVDLDATLGRGNNIDMIRNITDAVSIPVEAAGGLRSIDLVAGALEGADRVVLGTLAFRDRDALREILESYGSKKIVISVDHVKGKIMVDGWRENTGINLVDAMQGFVGAGFTEFLLTDVDRDGMMQGPETDTLGKVCRMSDSHVIASGGITVPGDVKSVRDAGAWGVILGKALYEGKVSVKGAISC.

D8 acts as the Proton acceptor in catalysis. D128 acts as the Proton donor in catalysis.

It belongs to the HisA/HisF family.

Its subcellular location is the cytoplasm. It catalyses the reaction 1-(5-phospho-beta-D-ribosyl)-5-[(5-phospho-beta-D-ribosylamino)methylideneamino]imidazole-4-carboxamide = 5-[(5-phospho-1-deoxy-D-ribulos-1-ylimino)methylamino]-1-(5-phospho-beta-D-ribosyl)imidazole-4-carboxamide. It functions in the pathway amino-acid biosynthesis; L-histidine biosynthesis; L-histidine from 5-phospho-alpha-D-ribose 1-diphosphate: step 4/9. The sequence is that of 1-(5-phosphoribosyl)-5-[(5-phosphoribosylamino)methylideneamino] imidazole-4-carboxamide isomerase from Cenarchaeum symbiosum (strain A).